We begin with the raw amino-acid sequence, 123 residues long: Sirohydrochlorin cobaltochelatase (123 aa).

The active-site Proton acceptor is the His-9. His-9 is a binding site for Co(2+). Substrate contacts are provided by residues Glu-43 and 68-73; that span reads FAAGMH. A Co(2+)-binding site is contributed by His-73.

The protein belongs to the CbiX family. CbiXS subfamily. As to quaternary structure, homotetramer; dimer of dimers.

It catalyses the reaction Co-sirohydrochlorin + 2 H(+) = sirohydrochlorin + Co(2+). Its pathway is cofactor biosynthesis; adenosylcobalamin biosynthesis; cob(II)yrinate a,c-diamide from sirohydrochlorin (anaerobic route): step 1/10. Catalyzes the insertion of Co(2+) into sirohydrochlorin as part of the anaerobic pathway to cobalamin biosynthesis. The protein is Sirohydrochlorin cobaltochelatase of Sulfolobus acidocaldarius (strain ATCC 33909 / DSM 639 / JCM 8929 / NBRC 15157 / NCIMB 11770).